The following is a 241-amino-acid chain: Enolase-phosphatase E1 (241 aa).

Mg(2+) is bound by residues Asp9 and Glu11. Residues 133-134 and Lys172 contribute to the substrate site; that span reads SS. Asp198 serves as a coordination point for Mg(2+).

The protein belongs to the HAD-like hydrolase superfamily. MasA/MtnC family. Monomer. It depends on Mg(2+) as a cofactor.

It is found in the cytoplasm. It localises to the nucleus. It catalyses the reaction 5-methylsulfanyl-2,3-dioxopentyl phosphate + H2O = 1,2-dihydroxy-5-(methylsulfanyl)pent-1-en-3-one + phosphate. Its pathway is amino-acid biosynthesis; L-methionine biosynthesis via salvage pathway; L-methionine from S-methyl-5-thio-alpha-D-ribose 1-phosphate: step 3/6. The protein operates within amino-acid biosynthesis; L-methionine biosynthesis via salvage pathway; L-methionine from S-methyl-5-thio-alpha-D-ribose 1-phosphate: step 4/6. Bifunctional enzyme that catalyzes the enolization of 2,3-diketo-5-methylthiopentyl-1-phosphate (DK-MTP-1-P) into the intermediate 2-hydroxy-3-keto-5-methylthiopentenyl-1-phosphate (HK-MTPenyl-1-P), which is then dephosphorylated to form the acireductone 1,2-dihydroxy-3-keto-5-methylthiopentene (DHK-MTPene). The sequence is that of Enolase-phosphatase E1 from Scheffersomyces stipitis (strain ATCC 58785 / CBS 6054 / NBRC 10063 / NRRL Y-11545) (Yeast).